Reading from the N-terminus, the 785-residue chain is Conserved oligomeric Golgi complex subunit 4 (785 aa).

A disordered region spans residues 1 to 24 (MADFDSPPKLSGVQPPSEGVGGGR). An N-acetylalanine modification is found at Ala2. An interaction with SCFD1 region spans residues 2–84 (ADFDSPPKLS…VTLHRMGPNL (83 aa)). Ser6 carries the post-translational modification Phosphoserine. The segment at 85 to 153 (QLIEGDAKQL…TALRNEDYEQ (69 aa)) is interaction with STX5. The d domain stretch occupies residues 618–740 (PQVQPWINSF…SQMATILNLE (123 aa)). Positions 741–785 (RVTEILDYWGPNSGPLTWRLTPAEVRQVLALRIDFRSEDIKRLRL) are e domain; essential for proper cell surface glycosylation.

The protein belongs to the COG4 family. Monomer. Component of the conserved oligomeric Golgi (COG) complex which is composed of eight different subunits and is required for normal Golgi morphology and localization. Mediates interaction of SCFD1 with the COG complex. Interacts with STX5.

It is found in the cytoplasm. The protein resides in the cytosol. Its subcellular location is the golgi apparatus membrane. Its function is as follows. Required for normal Golgi function. Plays a role in SNARE-pin assembly and Golgi-to-ER retrograde transport via its interaction with SCFD1. The polypeptide is Conserved oligomeric Golgi complex subunit 4 (COG4) (Pongo abelii (Sumatran orangutan)).